The sequence spans 543 residues: Oxalate--CoA ligase (543 aa).

196–207 is an ATP binding site; sequence HTSGTTSTPKTV. Positions 410–458 match the FACS motif; sequence ENYFRTGDQGYFDPEGFLVLTGRIKELINRGGEKISPIELDGIMLSHPK. The C-terminal peroxisome targeting signal (PTS1) motif lies at 541 to 543; it reads SKL.

It belongs to the ATP-dependent AMP-binding enzyme family. Interacts with PEX5.

The protein localises to the peroxisome matrix. It localises to the peroxisome membrane. It carries out the reaction oxalate + ATP + CoA = oxalyl-CoA + AMP + diphosphate. Catalyzes the first step in a degradation pathway of oxalate to CO(2) to protect the cell against the harmful effects of oxalate derived from endogenous processes or an environmental sources. This chain is Oxalate--CoA ligase, found in Saccharomyces cerevisiae (strain ATCC 204508 / S288c) (Baker's yeast).